An 825-amino-acid polypeptide reads, in one-letter code: Extracellular exo-alpha-L-arabinofuranosidase (825 aa).

Residues 1–29 (MSRIRWRYGTAATALLVAAGLVPTATAHA) form the signal peptide. Glu-58 contacts alpha-L-arabinofuranose. A CBM-cenC domain is found at 70 to 215 (AELVQNRSFE…ALDMVSLFPR (146 aa)). Alpha-L-arabinofuranose contacts are provided by residues Cys-247 and 379-380 (NE). Glu-380 (proton donor/acceptor) is an active-site residue.

It belongs to the glycosyl hydrolase 51 family.

The protein localises to the secreted. It catalyses the reaction Hydrolysis of terminal non-reducing alpha-L-arabinofuranoside residues in alpha-L-arabinosides.. In terms of biological role, involved in the degradation of arabinan and is a key enzyme in the complete degradation of the plant cell wall. Catalyzes the cleavage of terminal alpha-L-arabinofuranosyl residues of arabinan present in the arabinofuranosyl polysaccharides or oligosaccharides. It cannot act on other arabinose-containing polysaccharides and arabinoxylo-oligosaccharides. It leaves most of the polymer intact, including most of the main-chain residues and the arabinose side chains. It acts preferentially on the linear alpha-(1-&gt;2)-linked arabinofuranobiosides and alpha-(1-&gt;3)-linked arabinofuranobiosides, and is much less effective on alpha-(1-&gt;5)-linked arabinofuranobiosides. It also hydrolyzes the terminal alpha-(1-&gt;3)-linked arabinofuranotriosides in preference to the alpha-(1-&gt;5)-linked arabinofuranotriosides. This Streptomyces chartreusis protein is Extracellular exo-alpha-L-arabinofuranosidase.